Here is a 422-residue protein sequence, read N- to C-terminus: UDP-N-acetylmuramoylalanine--D-glutamate ligase (422 aa).

An ATP-binding site is contributed by Gly102 to Thr108.

Belongs to the MurCDEF family.

It is found in the cytoplasm. The catalysed reaction is UDP-N-acetyl-alpha-D-muramoyl-L-alanine + D-glutamate + ATP = UDP-N-acetyl-alpha-D-muramoyl-L-alanyl-D-glutamate + ADP + phosphate + H(+). Its pathway is cell wall biogenesis; peptidoglycan biosynthesis. Its function is as follows. Cell wall formation. Catalyzes the addition of glutamate to the nucleotide precursor UDP-N-acetylmuramoyl-L-alanine (UMA). This chain is UDP-N-acetylmuramoylalanine--D-glutamate ligase, found in Helicobacter pylori (strain ATCC 700392 / 26695) (Campylobacter pylori).